The chain runs to 597 residues: Probable E3 ubiquitin-protein ligase ARI1 (597 aa).

Residues 119–333 are TRIAD supradomain; the sequence is SQMSCDVCME…IAGHSCGRYQ (215 aa). Residues C123, C126, C140, H142, C145, C148, C167, C172, C214, C220, C236, C238, C243, C246, H251, C256, C283, and C286 each contribute to the Zn(2+) site. An RING-type 1 zinc finger spans residues 123-172; sequence CDVCMEDLPGDHMTRMDCGHCFCNNCWTEHFTVQINEGQSKRIRCMAHQC. Residues 194 to 256 form an IBR-type zinc finger; the sequence is AKFDRYLLES…LCQAHSPCSC (63 aa). An RING-type 2; atypical zinc finger spans residues 283 to 311; sequence CPKCYKPVEKNGGCNLVRCICGQCFCWLC. The active site involves C296. C301, C303, C308, C311, H319, and C329 together coordinate Zn(2+). The interval 536–575 is disordered; the sequence is FQPLDSGTSGVTSRPEQASGSRSSEDTICSSSQKRPKKEG. Positions 540-568 are enriched in polar residues; sequence DSGTSGVTSRPEQASGSRSSEDTICSSSQ.

This sequence belongs to the RBR family. Ariadne subfamily. Zn(2+) is required as a cofactor. As to expression, ubiquitous.

It carries out the reaction [E2 ubiquitin-conjugating enzyme]-S-ubiquitinyl-L-cysteine + [acceptor protein]-L-lysine = [E2 ubiquitin-conjugating enzyme]-L-cysteine + [acceptor protein]-N(6)-ubiquitinyl-L-lysine.. Its pathway is protein modification; protein ubiquitination. Functionally, might act as an E3 ubiquitin-protein ligase, or as part of E3 complex, which accepts ubiquitin from specific E2 ubiquitin-conjugating enzymes and then transfers it to substrates. In Arabidopsis thaliana (Mouse-ear cress), this protein is Probable E3 ubiquitin-protein ligase ARI1 (ARI1).